A 128-amino-acid polypeptide reads, in one-letter code: Sulfurtransferase TusD (128 aa).

Cysteine 78 (cysteine persulfide intermediate) is an active-site residue.

It belongs to the DsrE/TusD family. In terms of assembly, heterohexamer, formed by a dimer of trimers. The hexameric TusBCD complex contains 2 copies each of TusB, TusC and TusD. The TusBCD complex interacts with TusE.

Its subcellular location is the cytoplasm. In terms of biological role, part of a sulfur-relay system required for 2-thiolation of 5-methylaminomethyl-2-thiouridine (mnm(5)s(2)U) at tRNA wobble positions. Accepts sulfur from TusA and transfers it in turn to TusE. This Escherichia coli O139:H28 (strain E24377A / ETEC) protein is Sulfurtransferase TusD.